Reading from the N-terminus, the 352-residue chain is Fe(3+) ions import ATP-binding protein FbpC (352 aa).

Residues 5 to 239 (LHIGHLSKSF…PADLDAALFI (235 aa)) enclose the ABC transporter domain. 37–44 (GASGCGKT) contributes to the ATP binding site.

Belongs to the ABC transporter superfamily. Fe(3+) ion importer (TC 3.A.1.10) family. In terms of assembly, the complex is composed of two ATP-binding proteins (FbpC), two transmembrane proteins (FbpB) and a solute-binding protein (FbpA).

The protein resides in the cell inner membrane. It catalyses the reaction Fe(3+)(out) + ATP + H2O = Fe(3+)(in) + ADP + phosphate + H(+). In terms of biological role, part of the ABC transporter complex FbpABC involved in Fe(3+) ions import. Responsible for energy coupling to the transport system. This Neisseria gonorrhoeae (strain ATCC 700825 / FA 1090) protein is Fe(3+) ions import ATP-binding protein FbpC.